The primary structure comprises 404 residues: Spore germination protein YndF (404 aa).

The N-terminal stretch at 1 to 24 (MKSKLKRQLPAMVIVCLLMICVTG) is a signal peptide. Cys-25 is lipidated: N-palmitoyl cysteine. Cys-25 carries S-diacylglycerol cysteine lipidation.

It belongs to the GerABKC lipoprotein family.

Its subcellular location is the cell membrane. Its function is as follows. May be involved in spore germination. The protein is Spore germination protein YndF (yndF) of Bacillus subtilis (strain 168).